The following is a 247-amino-acid chain: 1-(5-phosphoribosyl)-5-[(5-phosphoribosylamino)methylideneamino] imidazole-4-carboxamide isomerase (247 aa).

D8 serves as the catalytic Proton acceptor. D129 serves as the catalytic Proton donor.

The protein belongs to the HisA/HisF family.

Its subcellular location is the cytoplasm. It catalyses the reaction 1-(5-phospho-beta-D-ribosyl)-5-[(5-phospho-beta-D-ribosylamino)methylideneamino]imidazole-4-carboxamide = 5-[(5-phospho-1-deoxy-D-ribulos-1-ylimino)methylamino]-1-(5-phospho-beta-D-ribosyl)imidazole-4-carboxamide. It participates in amino-acid biosynthesis; L-histidine biosynthesis; L-histidine from 5-phospho-alpha-D-ribose 1-diphosphate: step 4/9. The protein is 1-(5-phosphoribosyl)-5-[(5-phosphoribosylamino)methylideneamino] imidazole-4-carboxamide isomerase of Bradyrhizobium sp. (strain BTAi1 / ATCC BAA-1182).